We begin with the raw amino-acid sequence, 392 residues long: Early estrogen-induced gene 1 protein (392 aa).

The C2 NT-type domain maps to alanine 2–leucine 145. Residues asparagine 129 to lysine 138 form a required for interaction with TNFRSF11A/RANK region. The segment at leucine 173–proline 324 is disordered. Over residues glycine 183–serine 194 the composition is skewed to low complexity. Positions serine 228–aspartate 255 are enriched in polar residues. Over residues threonine 262 to serine 273 the composition is skewed to low complexity. Composition is skewed to basic and acidic residues over residues glycine 281–proline 300 and histidine 307–proline 324.

It belongs to the EEIG family. As to quaternary structure, part of a complex composed of EEIG1, TNFRSF11A/RANK, PLCG2, GAB2, TEC and BTK; complex formation increases in the presence of TNFSF11/RANKL. Interacts with PRDM1/BLIMP1; following TNFSF11/RANKL stimulation in bone marrow-derived macrophages, the interaction promotes the binding of PRDM1/BLIMP1 to the gene promoter of IRF8. Interacts (via N-terminus) with TNFRSF11A/RANK (via cytoplasmic domain); when in the presence of TNFSF11/RANKL. Expressed during TNFSF11/RANKL-induced differentiation of bone marrow-derived macrophages to osteoclasts.

Its subcellular location is the nucleus. The protein resides in the cytoplasm. It is found in the membrane raft. Functionally, key component of TNFSF11/RANKL- and TNF-induced osteoclastogenesis pathways, thereby mediates bone resorption in pathological bone loss conditions. Required for TNFSF11/RANKL-induced osteoclastogenesis via its interaction with TNFRSF11A/RANK, thereby facilitates the downsteam transcription of NFATC1 and activation of PLCG2. Facilitates recruitment of the transcriptional repressor PRDM1/BLIMP1 to the promoter of the anti-osteoclastogenesis gene IRF8, thereby resulting in transcription of osteoclast differentiation factors. May play a role in estrogen action. The polypeptide is Early estrogen-induced gene 1 protein (Eeig1) (Mus musculus (Mouse)).